A 362-amino-acid chain; its full sequence is Putative sphingolipid delta(4)-desaturase/C4-monooxygenase (362 aa).

A run of 3 helical transmembrane segments spans residues Tyr45–Leu61, Leu71–Ile91, and Phe107–Tyr127. The Histidine box-1 motif lies at His89–His93. The Histidine box-2 signature appears at His128–His132. 2 consecutive transmembrane segments (helical) span residues Leu160 to Ile177 and Leu198 to Ile218. Positions His259–His263 match the Histidine box-3 motif.

This sequence belongs to the fatty acid desaturase type 1 family. DEGS subfamily.

It is found in the membrane. The catalysed reaction is an N-acyl-15-methylhexadecasphinganine + 2 Fe(II)-[cytochrome b5] + O2 + 2 H(+) = an N-acyl-4-hydroxy-15-methylhexadecasphinganine + 2 Fe(III)-[cytochrome b5] + H2O. It carries out the reaction an N-acyl-15-methylhexadecasphinganine + 2 Fe(II)-[cytochrome b5] + O2 + 2 H(+) = an N-acyl-15-methylhexadecasphing-4-enine + 2 Fe(III)-[cytochrome b5] + 2 H2O. It catalyses the reaction a dihydroceramide + 2 Fe(II)-[cytochrome b5] + O2 + 2 H(+) = a phytoceramide + 2 Fe(III)-[cytochrome b5] + H2O. The enzyme catalyses an N-acylsphinganine + 2 Fe(II)-[cytochrome b5] + O2 + 2 H(+) = an N-acylsphing-4-enine + 2 Fe(III)-[cytochrome b5] + 2 H2O. The catalysed reaction is N-octanoylsphinganine + 2 Fe(II)-[cytochrome b5] + O2 + 2 H(+) = N-octanoyl-4-hydroxysphinganine + 2 Fe(III)-[cytochrome b5] + H2O. It carries out the reaction an N-acylsphinganine + 2 Fe(II)-[cytochrome b5] + O2 + 2 H(+) = an N-acyl-(4R)-4-hydroxysphinganine + 2 Fe(III)-[cytochrome b5] + H2O. It participates in lipid metabolism; sphingolipid metabolism. Functionally, bifunctional enzyme which acts both as a sphingolipid delta(4)-desaturase and a sphingolipid C4-monooxygenase. C.elegans contain specific sphingoid bases, which are unique or different in structure compared to the sphingoid bases found in other animals. Two examples of these distinctive compounds are: 15-methylhexadecasphinganine and 15-methylhexadecasphing-4-enine and this enzyme can catalyze their conversion. The polypeptide is Putative sphingolipid delta(4)-desaturase/C4-monooxygenase (ttm-5) (Caenorhabditis elegans).